Consider the following 968-residue polypeptide: Phosphoenolpyruvate carboxylase (968 aa).

Residue S11 is modified to Phosphoserine. Residues H172 and K602 contribute to the active site.

Belongs to the PEPCase type 1 family. In terms of assembly, homotetramer. Mg(2+) is required as a cofactor.

It is found in the cytoplasm. The catalysed reaction is oxaloacetate + phosphate = phosphoenolpyruvate + hydrogencarbonate. Its activity is regulated as follows. By light-reversible phosphorylation. Through the carboxylation of phosphoenolpyruvate (PEP) it forms oxaloacetate, a four-carbon dicarboxylic acid source for the tricarboxylic acid cycle. This Phaseolus vulgaris (Kidney bean) protein is Phosphoenolpyruvate carboxylase.